Reading from the N-terminus, the 314-residue chain is Inactive protein FRIGIDA (314 aa).

Residues 1–18 (MSNYPPTVAAQPTTTANP) are compositionally biased toward low complexity. Residues 1 to 31 (MSNYPPTVAAQPTTTANPLLQRHQSEQRRRE) are disordered. Residues 67–97 (VAVETFKRQFDDLQKHIESIENAIDSKLESN) adopt a coiled-coil conformation.

This sequence belongs to the Frigida family.

The protein localises to the nucleus. This is Inactive protein FRIGIDA (FRI) from Arabidopsis thaliana (Mouse-ear cress).